The primary structure comprises 261 residues: METEVEHTGLAIHPMDQFIVRKLFCHTESASPMNECTTNIHWYDITNVTMWMAIAVLVIAAILVLGTRRRAIVPSRSQSVAELLYGFIHNMVEEVTGHEGVKYFPYVMTLFLFVLCGNVLGLLPLSFTTTSHMAVTVPLALMVFVGVTALGFMRNGPGFLKMFWVTSAPLAIRPVLAVIEVISYFVRPVSHSIRLAGNMMAGHAVIKVIAGFASIAVVSPVVVGAVTAIYALELLVAVVQAYVFTILTCVYLRDAVGDAHH.

6 consecutive transmembrane segments (helical) span residues 45-65, 107-127, 133-153, 162-182, 209-229, and 232-252; these read ITNV…ILVL, VMTL…PLSF, MAVT…LGFM, MFWV…IEVI, IAGF…VTAI, and LELL…CVYL.

The protein belongs to the ATPase A chain family. As to quaternary structure, F-type ATPases have 2 components, CF(1) - the catalytic core - and CF(0) - the membrane proton channel. CF(1) has five subunits: alpha(3), beta(3), gamma(1), delta(1), epsilon(1). CF(0) has four main subunits: a, b, b' and c.

It is found in the cell inner membrane. Key component of the proton channel; it plays a direct role in the translocation of protons across the membrane. This Cereibacter sphaeroides (strain ATCC 17025 / ATH 2.4.3) (Rhodobacter sphaeroides) protein is ATP synthase subunit a.